The chain runs to 193 residues: Holliday junction branch migration complex subunit RuvA (193 aa).

The tract at residues M1–L64 is domain I. A domain II region spans residues T65–L139. Positions L139–A143 are flexible linker. The domain III stretch occupies residues S144 to A193.

Belongs to the RuvA family. In terms of assembly, homotetramer. Forms an RuvA(8)-RuvB(12)-Holliday junction (HJ) complex. HJ DNA is sandwiched between 2 RuvA tetramers; dsDNA enters through RuvA and exits via RuvB. An RuvB hexamer assembles on each DNA strand where it exits the tetramer. Each RuvB hexamer is contacted by two RuvA subunits (via domain III) on 2 adjacent RuvB subunits; this complex drives branch migration. In the full resolvosome a probable DNA-RuvA(4)-RuvB(12)-RuvC(2) complex forms which resolves the HJ.

Its subcellular location is the cytoplasm. In terms of biological role, the RuvA-RuvB-RuvC complex processes Holliday junction (HJ) DNA during genetic recombination and DNA repair, while the RuvA-RuvB complex plays an important role in the rescue of blocked DNA replication forks via replication fork reversal (RFR). RuvA specifically binds to HJ cruciform DNA, conferring on it an open structure. The RuvB hexamer acts as an ATP-dependent pump, pulling dsDNA into and through the RuvAB complex. HJ branch migration allows RuvC to scan DNA until it finds its consensus sequence, where it cleaves and resolves the cruciform DNA. In Burkholderia thailandensis (strain ATCC 700388 / DSM 13276 / CCUG 48851 / CIP 106301 / E264), this protein is Holliday junction branch migration complex subunit RuvA.